We begin with the raw amino-acid sequence, 229 residues long: NAD(P)H-quinone oxidoreductase subunit K, chloroplastic (229 aa).

[4Fe-4S] cluster is bound by residues Cys-43, Cys-44, Cys-108, and Cys-139.

It belongs to the complex I 20 kDa subunit family. As to quaternary structure, NDH is composed of at least 16 different subunits, 5 of which are encoded in the nucleus. The cofactor is [4Fe-4S] cluster.

Its subcellular location is the plastid. It localises to the chloroplast thylakoid membrane. It catalyses the reaction a plastoquinone + NADH + (n+1) H(+)(in) = a plastoquinol + NAD(+) + n H(+)(out). It carries out the reaction a plastoquinone + NADPH + (n+1) H(+)(in) = a plastoquinol + NADP(+) + n H(+)(out). Functionally, NDH shuttles electrons from NAD(P)H:plastoquinone, via FMN and iron-sulfur (Fe-S) centers, to quinones in the photosynthetic chain and possibly in a chloroplast respiratory chain. The immediate electron acceptor for the enzyme in this species is believed to be plastoquinone. Couples the redox reaction to proton translocation, and thus conserves the redox energy in a proton gradient. This is NAD(P)H-quinone oxidoreductase subunit K, chloroplastic from Aethionema cordifolium (Lebanon stonecress).